The following is a 398-amino-acid chain: Metalloprotease MmpA (398 aa).

His-22 is a binding site for Zn(2+). Glu-23 is a catalytic residue. His-26 is a binding site for Zn(2+). 3 helical membrane-spanning segments follow: residues 117–139 (FIAVAGPMANFILAILVFAVILV), 316–338 (QFWLIASLSVSIGFMNLLPIPVL), and 362–381 (AAGFRAGLALILGFMLFAAW). The PDZ domain maps to 130–203 (AILVFAVILV…MPIDFAVERD (74 aa)).

The protein belongs to the peptidase M50B family. Zn(2+) is required as a cofactor.

Its subcellular location is the cell inner membrane. Involved in the regulated intramembrane proteolysis (RIP) of the short isoform of PodJ protein (PodJS), during the swarmer-to-stalked transition. The cleavage occurs near or within the single transmembrane of PodJS thereby releasing the N-terminal segment into the cytoplasm for subsequent degradation. It contributes to preserve asymmetry in the next cell cycle through sequential degradation. This is Metalloprotease MmpA (mmpA) from Caulobacter vibrioides (strain ATCC 19089 / CIP 103742 / CB 15) (Caulobacter crescentus).